The primary structure comprises 306 residues: Ribonuclease Z (306 aa).

Zn(2+) contacts are provided by His-63, His-65, Asp-67, His-68, His-140, Asp-211, and His-269. Asp-67 serves as the catalytic Proton acceptor.

This sequence belongs to the RNase Z family. In terms of assembly, homodimer. The cofactor is Zn(2+).

It carries out the reaction Endonucleolytic cleavage of RNA, removing extra 3' nucleotides from tRNA precursor, generating 3' termini of tRNAs. A 3'-hydroxy group is left at the tRNA terminus and a 5'-phosphoryl group is left at the trailer molecule.. Zinc phosphodiesterase, which displays some tRNA 3'-processing endonuclease activity. Probably involved in tRNA maturation, by removing a 3'-trailer from precursor tRNA. The chain is Ribonuclease Z from Listeria monocytogenes serotype 4a (strain HCC23).